Here is a 343-residue protein sequence, read N- to C-terminus: Ribosomal RNA small subunit methyltransferase C (343 aa).

Belongs to the methyltransferase superfamily. RsmC family. As to quaternary structure, monomer.

The protein resides in the cytoplasm. The enzyme catalyses guanosine(1207) in 16S rRNA + S-adenosyl-L-methionine = N(2)-methylguanosine(1207) in 16S rRNA + S-adenosyl-L-homocysteine + H(+). Specifically methylates the guanine in position 1207 of 16S rRNA in the 30S particle. The chain is Ribosomal RNA small subunit methyltransferase C from Shigella flexneri serotype 5b (strain 8401).